Here is a 186-residue protein sequence, read N- to C-terminus: Dihydrofolate reductase (186 aa).

Residues 2 to 180 enclose the DHFR domain; that stretch reads RLNVVVAVSE…FTFKFCVYDV (179 aa). Residues Ala8 and 14–20 each bind NADP(+); that span reads GIGKGGG. Residue 28–33 coordinates substrate; that stretch reads DMEFFK. 51 to 53 lines the NADP(+) pocket; it reads RVT. Arg67 contacts substrate. NADP(+)-binding positions include 73-75 and 112-119; these read SST and GGYRLYKE.

The protein belongs to the dihydrofolate reductase family. Monomer.

The catalysed reaction is (6S)-5,6,7,8-tetrahydrofolate + NADP(+) = 7,8-dihydrofolate + NADPH + H(+). It functions in the pathway cofactor biosynthesis; tetrahydrofolate biosynthesis; 5,6,7,8-tetrahydrofolate from 7,8-dihydrofolate: step 1/1. Functionally, key enzyme in folate metabolism. Contributes to the de novo mitochondrial thymidylate biosynthesis pathway. Catalyzes an essential reaction for de novo glycine and purine synthesis, and for DNA precursor synthesis. The chain is Dihydrofolate reductase from Schistosoma mansoni (Blood fluke).